A 617-amino-acid chain; its full sequence is Vacuolar protein sorting-associated protein 33B (617 aa).

Belongs to the STXBP/unc-18/SEC1 family. Interacts with vipas39. Widely expressed from 4 hours post-fertilization (hpf) to 24 hpf. At 48 hpf, localized to brain, retina, ear, liver and proximal intestine. This expression pattern is more pronounced at 72 hpf and persists through 5 days post-fertilization (dpf). At 3 dpf and 4 dpf, expression in the liver is predominantly in developing biliary epithelial cells. No expression detected in kidney or spinal cord.

The protein resides in the late endosome membrane. The protein localises to the lysosome membrane. In terms of biological role, may play a role in vesicle-mediated protein trafficking to lysosomal compartments and in membrane docking/fusion reactions of late endosomes/lysosomes. Required for proper trafficking and targeting of the collagen-modifying enzyme lysyl hydroxylase 3 (LH3) to intracellular collagen. Mediates phagolysosomal fusion in macrophages. Proposed to be involved in endosomal maturation implicating vipas39. In epithelial cells, the vps33b:vipas39 complex may play a role in the apical recycling pathway and in the maintenance of the apical-basolateral polarity. Plays a role in bile duct development. This is Vacuolar protein sorting-associated protein 33B from Danio rerio (Zebrafish).